We begin with the raw amino-acid sequence, 96 residues long: Xylulose kinase (96 aa).

Position 71-72 (71-72 (QH)) interacts with substrate.

Belongs to the FGGY kinase family.

The catalysed reaction is D-xylulose + ATP = D-xylulose 5-phosphate + ADP + H(+). Functionally, catalyzes the phosphorylation of D-xylulose to D-xylulose 5-phosphate. In Arthrobacter sp. (strain NRRL B3728), this protein is Xylulose kinase.